The primary structure comprises 154 residues: uncharacterized protein (154 aa).

An N-terminal signal peptide occupies residues 1–19 (MWSLKSTLCIALLVTYSVA). ShKT domains follow at residues 67-102 (CADD…CGFC) and 113-150 (CVDS…CKLC). 6 disulfide bridges follow: C67–C102, C75–C95, C82–C99, C113–C150, C120–C143, and C129–C147.

This is an uncharacterized protein from Caenorhabditis elegans.